The sequence spans 330 residues: Cytoskeleton protein RodZ (330 aa).

Topologically, residues 1-111 are cytoplasmic; the sequence is MNTEATQDHQ…LGKRRKKRDG (111 aa). Residues 19–71 form the HTH cro/C1-type domain; the sequence is LRHAREQLGLSQQAVAERLCLKVSTVRDIEDDKAPADLASTFLRGYIRSYARL. Positions 30–49 form a DNA-binding region, H-T-H motif; the sequence is QQAVAERLCLKVSTVRDIED. The chain crosses the membrane as a helical; Signal-anchor for type II membrane protein span at residues 112 to 132; sequence WLMSFTWLVLFVVIGLSGAWW. Residues 133-330 are Periplasmic-facing; that stretch reads WQDHKAQQEE…TLNAEQSPAQ (198 aa). The span at 146–166 shows a compositional bias: polar residues; the sequence is MADQSSAELNGGDANSQNVPL. The tract at residues 146–237 is disordered; sequence MADQSSAELN…ASPLPTDQAN (92 aa). Composition is skewed to low complexity over residues 176–202 and 216–233; these read TDSA…TPAD and TAGT…PLPT.

It belongs to the RodZ family.

It is found in the cell inner membrane. Cytoskeletal protein that is involved in cell-shape control through regulation of the length of the long axis. This chain is Cytoskeleton protein RodZ, found in Klebsiella pneumoniae (strain 342).